Here is a 232-residue protein sequence, read N- to C-terminus: Probable transcriptional regulatory protein Bd1964 (232 aa).

This sequence belongs to the TACO1 family.

The protein localises to the cytoplasm. This is Probable transcriptional regulatory protein Bd1964 from Bdellovibrio bacteriovorus (strain ATCC 15356 / DSM 50701 / NCIMB 9529 / HD100).